The primary structure comprises 150 residues: 3-hydroxyacyl-[acyl-carrier-protein] dehydratase FabZ (150 aa).

Residue histidine 53 is part of the active site.

The protein belongs to the thioester dehydratase family. FabZ subfamily.

It is found in the cytoplasm. The enzyme catalyses a (3R)-hydroxyacyl-[ACP] = a (2E)-enoyl-[ACP] + H2O. Functionally, involved in unsaturated fatty acids biosynthesis. Catalyzes the dehydration of short chain beta-hydroxyacyl-ACPs and long chain saturated and unsaturated beta-hydroxyacyl-ACPs. This is 3-hydroxyacyl-[acyl-carrier-protein] dehydratase FabZ from Proteus mirabilis (strain HI4320).